A 398-amino-acid chain; its full sequence is Riboflavin biosynthesis protein RibBA (398 aa).

The DHBP synthase stretch occupies residues 1–199 (MFHPIEEALE…IKDLIEYRYN (199 aa)). Residues 26–27 (RE), Asp31, 138–142 (RAGHT), and Glu162 each bind D-ribulose 5-phosphate. Residue Glu27 participates in Mg(2+) binding. His141 lines the Mg(2+) pocket. A GTP cyclohydrolase II region spans residues 200-398 (ITTLVNREVD…MKKLGHLLHF (199 aa)). GTP is bound at residue 251 to 255 (RVHSE). Cys256, Cys267, and Cys269 together coordinate Zn(2+). GTP is bound by residues Gln272, 294–296 (EGR), and Thr316. The Proton acceptor; for GTP cyclohydrolase activity role is filled by Asp328. Residue Arg330 is the Nucleophile; for GTP cyclohydrolase activity of the active site. Residues Thr351 and Lys356 each coordinate GTP.

The protein in the N-terminal section; belongs to the DHBP synthase family. It in the C-terminal section; belongs to the GTP cyclohydrolase II family. It depends on Mg(2+) as a cofactor. The cofactor is Mn(2+). Zn(2+) serves as cofactor.

The enzyme catalyses D-ribulose 5-phosphate = (2S)-2-hydroxy-3-oxobutyl phosphate + formate + H(+). The catalysed reaction is GTP + 4 H2O = 2,5-diamino-6-hydroxy-4-(5-phosphoribosylamino)-pyrimidine + formate + 2 phosphate + 3 H(+). It participates in cofactor biosynthesis; riboflavin biosynthesis; 2-hydroxy-3-oxobutyl phosphate from D-ribulose 5-phosphate: step 1/1. The protein operates within cofactor biosynthesis; riboflavin biosynthesis; 5-amino-6-(D-ribitylamino)uracil from GTP: step 1/4. Catalyzes the conversion of D-ribulose 5-phosphate to formate and 3,4-dihydroxy-2-butanone 4-phosphate. In terms of biological role, catalyzes the conversion of GTP to 2,5-diamino-6-ribosylamino-4(3H)-pyrimidinone 5'-phosphate (DARP), formate and pyrophosphate. This is Riboflavin biosynthesis protein RibBA from Bacillus velezensis (strain DSM 23117 / BGSC 10A6 / LMG 26770 / FZB42) (Bacillus amyloliquefaciens subsp. plantarum).